The chain runs to 952 residues: Protein translocase subunit SecA (952 aa).

ATP-binding positions include Gln135, 153–157 (GEGKT), and Asp575. Low complexity predominate over residues 907–921 (AAPAAAIPGVSAKAA). The tract at residues 907-946 (AAPAAAIPGVSAKAATQSTTPAAKEIGRNDPCPCGSGKKY) is disordered. Residues Cys938, Cys940, Cys949, and Cys950 each contribute to the Zn(2+) site.

This sequence belongs to the SecA family. In terms of assembly, monomer and homodimer. Part of the essential Sec protein translocation apparatus which comprises SecA, SecYEG and auxiliary proteins SecDF. Other proteins may also be involved. The cofactor is Zn(2+).

The protein localises to the cell membrane. It localises to the cytoplasm. The catalysed reaction is ATP + H2O + cellular proteinSide 1 = ADP + phosphate + cellular proteinSide 2.. Part of the Sec protein translocase complex. Interacts with the SecYEG preprotein conducting channel. Has a central role in coupling the hydrolysis of ATP to the transfer of proteins into and across the cell membrane, serving as an ATP-driven molecular motor driving the stepwise translocation of polypeptide chains across the membrane. In Dehalococcoides mccartyi (strain CBDB1), this protein is Protein translocase subunit SecA.